We begin with the raw amino-acid sequence, 661 residues long: Fusaric acid cluster transcription factor FUB12 (661 aa).

Positions 17–48 form a DNA-binding region, zn(2)-C6 fungal-type; the sequence is CVPCRTRKIKCNAAVVGLPCGSCVSRECPDEC. Disordered stretches follow at residues 56–132 and 151–184; these read RTVK…PPGQ and SAAQTDASDHQSNDEPDDSFNSQIHHWNPPPQLD. The span at 73-98 shows a compositional bias: polar residues; that stretch reads PDTNGSVLSPRQQQLPTNVSRQATDS. The segment covering 99–109 has biased composition (basic and acidic residues); the sequence is SHSDPVEESIH. A compositionally biased stretch (polar residues) spans 110–119; the sequence is ASHTGSSLRN. Positions 120-129 are enriched in basic and acidic residues; the sequence is DTPHSRDRRP.

The protein localises to the nucleus. Its function is as follows. Transcription factor that is involved in the formation of the two Fusaric acid derivatives, dehydrofusaric acid and fusarinolic acid, serving as a detoxification mechanism. This Gibberella moniliformis (strain M3125 / FGSC 7600) (Maize ear and stalk rot fungus) protein is Fusaric acid cluster transcription factor FUB12.